Reading from the N-terminus, the 163-residue chain is Ureidoglycolate lyase (163 aa).

Belongs to the ureidoglycolate lyase family. As to quaternary structure, homodimer. Requires Ni(2+) as cofactor.

The catalysed reaction is (S)-ureidoglycolate = urea + glyoxylate. Its pathway is nitrogen metabolism; (S)-allantoin degradation. Functionally, catalyzes the catabolism of the allantoin degradation intermediate (S)-ureidoglycolate, generating urea and glyoxylate. Involved in the utilization of allantoin as nitrogen source. This is Ureidoglycolate lyase from Mesorhizobium japonicum (strain LMG 29417 / CECT 9101 / MAFF 303099) (Mesorhizobium loti (strain MAFF 303099)).